We begin with the raw amino-acid sequence, 130 residues long: Small ribosomal subunit protein uS8 (130 aa).

Belongs to the universal ribosomal protein uS8 family. Part of the 30S ribosomal subunit.

One of the primary rRNA binding proteins, it binds directly to 16S rRNA central domain where it helps coordinate assembly of the platform of the 30S subunit. This chain is Small ribosomal subunit protein uS8, found in Korarchaeum cryptofilum (strain OPF8).